The chain runs to 64 residues: Toxin BmKIT3 (64 aa).

The 61-residue stretch at 1-61 (DGYIRGSNGC…TWKSESNTCG (61 aa)) folds into the LCN-type CS-alpha/beta domain. Intrachain disulfides connect C10–C60, C14–C35, C21–C42, and C25–C44. C60 is modified (cysteine amide).

It belongs to the long (4 C-C) scorpion toxin superfamily. Sodium channel inhibitor family. Beta subfamily. Expressed by the venom gland.

It localises to the secreted. In terms of biological role, depressant insect beta-toxins cause a transient contraction paralysis followed by a slow flaccid paralysis. They bind voltage-independently at site-4 of sodium channels (Nav) and shift the voltage of activation toward more negative potentials thereby affecting sodium channel activation and promoting spontaneous and repetitive firing. This is Toxin BmKIT3 from Olivierus martensii (Manchurian scorpion).